Here is a 759-residue protein sequence, read N- to C-terminus: Protein MTSS 1 (759 aa).

In terms of domain architecture, IMD spans 1–254; that stretch reads MEAVIEKECS…EQVILDLKGS (254 aa). Residues 108–157 are a coiled coil; that stretch reads LQEQMEEWKKVANQLDKDHAKEYKKARQEIKNKSSDTLKLQKKAKKVDAQ. The segment at 259–309 is disordered; the sequence is SYQTPPSSPSTTMSRKSSVCSSLNSVNSSDSRSSGSHSHSPSSHYRYRSSN. Thr262 bears the Phosphothreonine mark. Phosphoserine is present on residues Ser265, Ser266, Ser275, and Ser326. A disordered region spans residues 331–354; sequence QDAFQSKSPSPMPPEAANQLSNGF. Residue Thr429 is modified to Phosphothreonine. Disordered regions lie at residues 431–472 and 569–759; these read QRRK…AATR and KRPA…PRFS. Thr607 carries the phosphothreonine modification. Over residues 612–627 the composition is skewed to low complexity; sequence PIPIKTPVIPVKTPTV. A phosphoserine mark is found at Ser648 and Ser651. Residues 660-670 show a composition bias toward polar residues; it reads GVSNIPSSLWS. Pro residues predominate over residues 675 to 685; the sequence is VNPPLPGPKPS. Residues 731-748 form the WH2 domain; the sequence is QGEDMLNAIRRGVKLKKT.

It belongs to the MTSS family. As to quaternary structure, binds to actin. Strongly expressed in the developing neurons and skeletal and cardiac muscles in embryos. Strongly expressed also in liver, outer layers of the kidney, and in the Purkinje cells of the brain.

The protein resides in the cytoplasm. It localises to the cytoskeleton. Its function is as follows. Inhibits the nucleation of actin filaments in vitro. The polypeptide is Protein MTSS 1 (Mus musculus (Mouse)).